The sequence spans 134 residues: Protein NrdI (134 aa).

Belongs to the NrdI family.

Probably involved in ribonucleotide reductase function. The chain is Protein NrdI from Chromohalobacter salexigens (strain ATCC BAA-138 / DSM 3043 / CIP 106854 / NCIMB 13768 / 1H11).